The primary structure comprises 968 residues: RNA polymerase-associated protein RapA (968 aa).

The Helicase ATP-binding domain occupies 163 to 332 (EVGRRYAPRV…FARLRLLDPD (170 aa)). An ATP-binding site is contributed by 176–183 (DEVGLGKT). A DEAH box motif is present at residues 278–281 (DEAH). The Helicase C-terminal domain occupies 491-643 (RVDWLIAFLK…ELTCPSGHVL (153 aa)).

The protein belongs to the SNF2/RAD54 helicase family. RapA subfamily. As to quaternary structure, interacts with the RNAP. Has a higher affinity for the core RNAP than for the holoenzyme. Its ATPase activity is stimulated by binding to RNAP.

Transcription regulator that activates transcription by stimulating RNA polymerase (RNAP) recycling in case of stress conditions such as supercoiled DNA or high salt concentrations. Probably acts by releasing the RNAP, when it is trapped or immobilized on tightly supercoiled DNA. Does not activate transcription on linear DNA. Probably not involved in DNA repair. This is RNA polymerase-associated protein RapA from Shewanella putrefaciens (strain CN-32 / ATCC BAA-453).